A 430-amino-acid chain; its full sequence is Ribosomal protein uS12 methylthiotransferase RimO (430 aa).

The MTTase N-terminal domain occupies 2 to 119; sequence ISVYSISLGC…WPAMLAHALK (118 aa). The [4Fe-4S] cluster site is built by Cys-11, Cys-46, Cys-81, Cys-145, Cys-149, and Cys-152. The Radical SAM core domain maps to 131–361; it reads STGPSYAWLK…MEVQAEISEE (231 aa). Residues 364–430 enclose the TRAM domain; the sequence is AVHEGTRQQV…TRTYDLVALV (67 aa).

The protein belongs to the methylthiotransferase family. RimO subfamily. [4Fe-4S] cluster serves as cofactor.

The protein resides in the cytoplasm. The catalysed reaction is L-aspartate(89)-[ribosomal protein uS12]-hydrogen + (sulfur carrier)-SH + AH2 + 2 S-adenosyl-L-methionine = 3-methylsulfanyl-L-aspartate(89)-[ribosomal protein uS12]-hydrogen + (sulfur carrier)-H + 5'-deoxyadenosine + L-methionine + A + S-adenosyl-L-homocysteine + 2 H(+). In terms of biological role, catalyzes the methylthiolation of an aspartic acid residue of ribosomal protein uS12. This Nitratidesulfovibrio vulgaris (strain DP4) (Desulfovibrio vulgaris) protein is Ribosomal protein uS12 methylthiotransferase RimO.